Consider the following 891-residue polypeptide: Translation initiation factor IF-2 (891 aa).

Residues 50-303 (KKEHGSADES…TSMQHGFDKS (254 aa)) are disordered. Composition is skewed to basic and acidic residues over residues 102 to 237 (TLEE…KTAD) and 245 to 261 (HARE…EQQP). Residues 390-559 (GRAPVVTIMG…LLQSEVLELT (170 aa)) form the tr-type G domain. The G1 stretch occupies residues 399–406 (GHVDHGKT). 399-406 (GHVDHGKT) lines the GTP pocket. Residues 424–428 (GITQH) are G2. The interval 445–448 (DTPG) is G3. Residues 445-449 (DTPGH) and 499-502 (NKID) each bind GTP. The interval 499–502 (NKID) is G4. The segment at 535-537 (SAK) is G5.

This sequence belongs to the TRAFAC class translation factor GTPase superfamily. Classic translation factor GTPase family. IF-2 subfamily.

It localises to the cytoplasm. Functionally, one of the essential components for the initiation of protein synthesis. Protects formylmethionyl-tRNA from spontaneous hydrolysis and promotes its binding to the 30S ribosomal subunits. Also involved in the hydrolysis of GTP during the formation of the 70S ribosomal complex. The protein is Translation initiation factor IF-2 of Aliivibrio salmonicida (strain LFI1238) (Vibrio salmonicida (strain LFI1238)).